The chain runs to 101 residues: NADH-quinone oxidoreductase subunit K (101 aa).

The next 3 membrane-spanning stretches (helical) occupy residues 5–25 (LGQVLMLAGLLFVAGLVGVLL), 29–49 (LIMILIGVEIMLNAVGLVLVG), and 62–82 (VALLLMAVAAAEVTIALALVV).

The protein belongs to the complex I subunit 4L family. NDH-1 is composed of 14 different subunits. Subunits NuoA, H, J, K, L, M, N constitute the membrane sector of the complex.

The protein localises to the cell inner membrane. The enzyme catalyses a quinone + NADH + 5 H(+)(in) = a quinol + NAD(+) + 4 H(+)(out). Its function is as follows. NDH-1 shuttles electrons from NADH, via FMN and iron-sulfur (Fe-S) centers, to quinones in the respiratory chain. The immediate electron acceptor for the enzyme in this species is believed to be ubiquinone. Couples the redox reaction to proton translocation (for every two electrons transferred, four hydrogen ions are translocated across the cytoplasmic membrane), and thus conserves the redox energy in a proton gradient. The sequence is that of NADH-quinone oxidoreductase subunit K from Syntrophotalea carbinolica (strain DSM 2380 / NBRC 103641 / GraBd1) (Pelobacter carbinolicus).